Reading from the N-terminus, the 273-residue chain is MPAHMIPQVARAVVQSTYSGSLSAIDDNLEPTDDIDQAAYITTGRYVVCALCLATVSDSPTQLSRWVFHHCSDDRRPLIRSMLLASSRHAHALRESREVDMRRISRLVHQADEEDELDAPRQARRIGYVDLHSCDLQNPTPELATRQLCNDPTRTHSTHPHLARSHPYMLPTAALDIDPPEPVTMFATMSRTDGVPMLFNMTHRNVEVLASPAARASLMYALLKLANAKLTPKQRSIMYGPSANDMVAACTKACAATTFRHVGRYAARVVIEE.

It belongs to the aquareoviridae outer capsid VP7 protein family. In terms of assembly, interacts with VP4 and VP6.

The protein localises to the virion. Functionally, interacts with VP4 to form the outer icosahedral capsid with an incomplete T=13 symmetry, about 80 nm in diameter, and consisting of 200 VP4-VP7 trimers. This Ctenopharyngodon idella (Grass carp) protein is Outer capsid protein VP7 (S10).